A 343-amino-acid polypeptide reads, in one-letter code: Arginine N-succinyltransferase (343 aa).

Leucine 125 is a binding site for succinyl-CoA. The active-site Proton donor is histidine 229.

Belongs to the arginine N-succinyltransferase family.

The catalysed reaction is succinyl-CoA + L-arginine = N(2)-succinyl-L-arginine + CoA + H(+). It participates in amino-acid degradation; L-arginine degradation via AST pathway; L-glutamate and succinate from L-arginine: step 1/5. Functionally, catalyzes the transfer of succinyl-CoA to arginine to produce N(2)-succinylarginine. The polypeptide is Arginine N-succinyltransferase (Photorhabdus laumondii subsp. laumondii (strain DSM 15139 / CIP 105565 / TT01) (Photorhabdus luminescens subsp. laumondii)).